A 494-amino-acid chain; its full sequence is AAA-ATPase At2g18190 (494 aa).

Residues 13–29 form a helical membrane-spanning segment; it reads SSLFTAYASLTGFLMLF. Residue 251–258 coordinates ATP; that stretch reads GPPGTGKS. Basic and acidic residues predominate over residues 459-470; the sequence is TCRKLDGDDKHN. Residues 459-494 form a disordered region; sequence TCRKLDGDDKHNVSSTNDLKKTKKKKKGGKGKAKGN. Residues 479–494 show a composition bias toward basic residues; it reads KTKKKKKGGKGKAKGN.

It belongs to the AAA ATPase family. BCS1 subfamily. The cofactor is Mg(2+).

The protein localises to the membrane. The catalysed reaction is ATP + H2O = ADP + phosphate + H(+). The polypeptide is AAA-ATPase At2g18190 (Arabidopsis thaliana (Mouse-ear cress)).